Here is a 443-residue protein sequence, read N- to C-terminus: Protein IQ-DOMAIN 11 (443 aa).

Positions 5–20 (KGLFTVLKRIFISEVN) are calmodulin-binding. Short sequence motifs (nuclear localization signal) lie at residues 11 to 18 (LKRIFISE) and 27 to 34 (RRKWTFWK). The disordered stretch occupies residues 44-65 (ITAPPEHRTSHESHEEQKEEIV). The segment covering 48 to 64 (PEHRTSHESHEEQKEEI) has biased composition (basic and acidic residues). IQ domains are found at residues 113-138 (AATR…GIVK) and 139-161 (LQAY…CLQS). Positions 277-293 (FSSKTKPKDETLNEKQL) are enriched in basic and acidic residues. Residues 277-361 (FSSKTKPKDE…PRSFDTQSES (85 aa)) are disordered.

The protein belongs to the IQD family. Binds to multiple calmodulin (CaM) in the presence of Ca(2+) and CaM-like proteins. As to expression, expressed in hypocotyls, cotyledons, leaves and petioles.

The protein localises to the nucleus. The protein resides in the cytoplasm. Its subcellular location is the cytoskeleton. May be involved in cooperative interactions with calmodulins or calmodulin-like proteins. Recruits calmodulin proteins to microtubules, thus being a potential scaffold in cellular signaling and trafficking. Regulates cell shape and elongation in aerial organs (i.e. epidermis pavement cells) probably by regulating cortical microtubules (MT) arrays orientation. May associate with nucleic acids and regulate gene expression at the transcriptional or post-transcriptional level. The protein is Protein IQ-DOMAIN 11 of Arabidopsis thaliana (Mouse-ear cress).